Reading from the N-terminus, the 293-residue chain is 4-hydroxy-tetrahydrodipicolinate synthase (293 aa).

Threonine 45 contacts pyruvate. Residue tyrosine 133 is the Proton donor/acceptor of the active site. The active-site Schiff-base intermediate with substrate is the lysine 162. Isoleucine 204 is a binding site for pyruvate.

This sequence belongs to the DapA family. In terms of assembly, homotetramer; dimer of dimers.

The protein localises to the cytoplasm. The catalysed reaction is L-aspartate 4-semialdehyde + pyruvate = (2S,4S)-4-hydroxy-2,3,4,5-tetrahydrodipicolinate + H2O + H(+). It participates in amino-acid biosynthesis; L-lysine biosynthesis via DAP pathway; (S)-tetrahydrodipicolinate from L-aspartate: step 3/4. Catalyzes the condensation of (S)-aspartate-beta-semialdehyde [(S)-ASA] and pyruvate to 4-hydroxy-tetrahydrodipicolinate (HTPA). The polypeptide is 4-hydroxy-tetrahydrodipicolinate synthase (Brucella suis biovar 1 (strain 1330)).